The primary structure comprises 235 residues: 7-cyano-7-deazaguanine synthase (235 aa).

16-26 (FSGGQDSTTCL) contributes to the ATP binding site. Residues C193, C201, C204, and C207 each contribute to the Zn(2+) site.

The protein belongs to the QueC family. It depends on Zn(2+) as a cofactor.

It carries out the reaction 7-carboxy-7-deazaguanine + NH4(+) + ATP = 7-cyano-7-deazaguanine + ADP + phosphate + H2O + H(+). Its pathway is purine metabolism; 7-cyano-7-deazaguanine biosynthesis. Functionally, catalyzes the ATP-dependent conversion of 7-carboxy-7-deazaguanine (CDG) to 7-cyano-7-deazaguanine (preQ(0)). This is 7-cyano-7-deazaguanine synthase from Actinobacillus succinogenes (strain ATCC 55618 / DSM 22257 / CCUG 43843 / 130Z).